We begin with the raw amino-acid sequence, 253 residues long: Pimeloyl-[acyl-carrier protein] methyl ester esterase (253 aa).

Substrate contacts are provided by residues W18, S78–L79, and F139–D143. The Nucleophile role is filled by S78. Active-site residues include D203 and H231. H231 contributes to the substrate binding site.

It belongs to the AB hydrolase superfamily. Carboxylesterase BioH family. In terms of assembly, monomer.

It is found in the cytoplasm. The catalysed reaction is 6-carboxyhexanoyl-[ACP] methyl ester + H2O = 6-carboxyhexanoyl-[ACP] + methanol + H(+). It functions in the pathway cofactor biosynthesis; biotin biosynthesis. Functionally, the physiological role of BioH is to remove the methyl group introduced by BioC when the pimeloyl moiety is complete. It allows to synthesize pimeloyl-ACP via the fatty acid synthetic pathway through the hydrolysis of the ester bonds of pimeloyl-ACP esters. The sequence is that of Pimeloyl-[acyl-carrier protein] methyl ester esterase from Xanthomonas oryzae pv. oryzae (strain MAFF 311018).